Reading from the N-terminus, the 660-residue chain is Zeaxanthin epoxidase, chloroplastic (660 aa).

The N-terminal 49 residues, 1–49, are a transit peptide targeting the chloroplast; sequence MYASSARDGIPGKWCNARRKQLPLLISKDFPAELYHSLPCKSLENGHIK. FAD is bound by residues 79–107 and 357–370; these read KVLV…LVFE and TFSW…LLGD. The 65-residue stretch at 545 to 609 folds into the FHA domain; the sequence is LVLSRDENMP…HGTWFIDNEG (65 aa).

The cofactor is FAD.

The protein resides in the plastid. It is found in the chloroplast membrane. Its subcellular location is the chloroplast thylakoid membrane. The catalysed reaction is all-trans-zeaxanthin + 4 reduced [2Fe-2S]-[ferredoxin] + 2 O2 + 4 H(+) = all-trans-violaxanthin + 4 oxidized [2Fe-2S]-[ferredoxin] + 2 H2O. The enzyme catalyses all-trans-zeaxanthin + 2 reduced [2Fe-2S]-[ferredoxin] + O2 + 2 H(+) = all-trans-antheraxanthin + 2 oxidized [2Fe-2S]-[ferredoxin] + H2O. It carries out the reaction all-trans-antheraxanthin + 2 reduced [2Fe-2S]-[ferredoxin] + O2 + 2 H(+) = all-trans-violaxanthin + 2 oxidized [2Fe-2S]-[ferredoxin] + H2O. It catalyses the reaction beta-cryptoxanthin + 2 reduced [2Fe-2S]-[ferredoxin] + O2 + 2 H(+) = (5R,6S)-5,6-epoxi-beta-cryptoxanthin + 2 oxidized [2Fe-2S]-[ferredoxin] + H2O. It participates in plant hormone biosynthesis; abscisate biosynthesis. Functionally, converts zeaxanthin into antheraxanthin and subsequently violaxanthin. Also acts on beta-cryptoxanthin. Involved in the epoxidation of zeaxanthin. The polypeptide is Zeaxanthin epoxidase, chloroplastic (Capsicum annuum (Capsicum pepper)).